The sequence spans 295 residues: Elongation factor Ts (295 aa).

The involved in Mg(2+) ion dislocation from EF-Tu stretch occupies residues 79 to 82; sequence TDFV.

The protein belongs to the EF-Ts family.

The protein localises to the cytoplasm. Its function is as follows. Associates with the EF-Tu.GDP complex and induces the exchange of GDP to GTP. It remains bound to the aminoacyl-tRNA.EF-Tu.GTP complex up to the GTP hydrolysis stage on the ribosome. This chain is Elongation factor Ts, found in Bacillus mycoides (strain KBAB4) (Bacillus weihenstephanensis).